A 139-amino-acid chain; its full sequence is MRNRTVAAGAVLTAALLGACTSHPPTHISSTASVTVNGHDRTFHIVKCGQVQWTRMIDIGSEFSGAKVVVDENAQPATTQSVRIRNVGGFSGMYSQGGDGNADMSMTGDKFTVSGTANGYQTDKPSEPAAATFKIVVTC.

The signal sequence occupies residues 1–19 (MRNRTVAAGAVLTAALLGA). C20 is lipidated: N-palmitoyl cysteine. C20 carries the S-diacylglycerol cysteine lipid modification.

Belongs to the mycobacterial 19 kDa antigen family.

It is found in the cell membrane. This is Putative lipoprotein MIP_01412 from Mycobacterium indicus pranii (strain DSM 45239 / MTCC 9506).